We begin with the raw amino-acid sequence, 182 residues long: MAKLVSKTYGEALFDLALENQSLDIIEEEIKAVKMVFNENTELIKFLNHPKITKEEKVAFVENIFKGRVSDDVTGFLVIIIKKGRYDEISGIFDYFLAKVREHKNIGVAYVTSAVEISEQEKEQIKDKLLATTKYVQFEMNYKVDASILGGLIIRIGDRVVDSSLKSKLNTLSKNLFKIQLG.

Belongs to the ATPase delta chain family. F-type ATPases have 2 components, F(1) - the catalytic core - and F(0) - the membrane proton channel. F(1) has five subunits: alpha(3), beta(3), gamma(1), delta(1), epsilon(1). F(0) has three main subunits: a(1), b(2) and c(10-14). The alpha and beta chains form an alternating ring which encloses part of the gamma chain. F(1) is attached to F(0) by a central stalk formed by the gamma and epsilon chains, while a peripheral stalk is formed by the delta and b chains.

It localises to the cell membrane. In terms of biological role, f(1)F(0) ATP synthase produces ATP from ADP in the presence of a proton or sodium gradient. F-type ATPases consist of two structural domains, F(1) containing the extramembraneous catalytic core and F(0) containing the membrane proton channel, linked together by a central stalk and a peripheral stalk. During catalysis, ATP synthesis in the catalytic domain of F(1) is coupled via a rotary mechanism of the central stalk subunits to proton translocation. Functionally, this protein is part of the stalk that links CF(0) to CF(1). It either transmits conformational changes from CF(0) to CF(1) or is implicated in proton conduction. In Lachnoclostridium phytofermentans (strain ATCC 700394 / DSM 18823 / ISDg) (Clostridium phytofermentans), this protein is ATP synthase subunit delta.